A 381-amino-acid chain; its full sequence is tRNA pseudouridine synthase D (381 aa).

Catalysis depends on Asp81, which acts as the Nucleophile. Residues 160–335 (GMPNYFGSQR…TLGSRRFFWV (176 aa)) form the TRUD domain.

Belongs to the pseudouridine synthase TruD family.

The catalysed reaction is uridine(13) in tRNA = pseudouridine(13) in tRNA. In terms of biological role, responsible for synthesis of pseudouridine from uracil-13 in transfer RNAs. This Helicobacter pylori (strain J99 / ATCC 700824) (Campylobacter pylori J99) protein is tRNA pseudouridine synthase D.